The primary structure comprises 250 residues: 1-(5-phosphoribosyl)-5-[(5-phosphoribosylamino)methylideneamino] imidazole-4-carboxamide isomerase (250 aa).

Residue Asp8 is the Proton acceptor of the active site. Asp131 functions as the Proton donor in the catalytic mechanism.

Belongs to the HisA/HisF family.

The protein resides in the cytoplasm. The enzyme catalyses 1-(5-phospho-beta-D-ribosyl)-5-[(5-phospho-beta-D-ribosylamino)methylideneamino]imidazole-4-carboxamide = 5-[(5-phospho-1-deoxy-D-ribulos-1-ylimino)methylamino]-1-(5-phospho-beta-D-ribosyl)imidazole-4-carboxamide. It functions in the pathway amino-acid biosynthesis; L-histidine biosynthesis; L-histidine from 5-phospho-alpha-D-ribose 1-diphosphate: step 4/9. The chain is 1-(5-phosphoribosyl)-5-[(5-phosphoribosylamino)methylideneamino] imidazole-4-carboxamide isomerase from Paraburkholderia phytofirmans (strain DSM 17436 / LMG 22146 / PsJN) (Burkholderia phytofirmans).